We begin with the raw amino-acid sequence, 155 residues long: uncharacterized protein (155 aa).

Over residues 28-38 (KKGKDRPREDG) the composition is skewed to basic and acidic residues. The tract at residues 28–52 (KKGKDRPREDGTQQQPSESKGEAAC) is disordered.

This is an uncharacterized protein from Dryophytes versicolor (chameleon treefrog).